Consider the following 407-residue polypeptide: Divalent metal cation transporter MntH (407 aa).

Transmembrane regions (helical) follow at residues 16–36 (LTLL…GNFA), 43–63 (STFG…AMLV), 95–115 (WVQA…GAAV), 119–139 (LLLG…TWGI), 152–172 (FVVG…LVFS), 193–213 (AVYL…IYLH), 239–259 (IAMT…AAAF), 288–308 (LFGL…TLAG), 318–338 (FTIP…VVIA), 346–366 (ILVL…IPLL), and 387–407 (VGRL…VAMI).

Belongs to the NRAMP family.

The protein localises to the cell inner membrane. H(+)-stimulated, divalent metal cation uptake system. The sequence is that of Divalent metal cation transporter MntH from Aeromonas hydrophila subsp. hydrophila (strain ATCC 7966 / DSM 30187 / BCRC 13018 / CCUG 14551 / JCM 1027 / KCTC 2358 / NCIMB 9240 / NCTC 8049).